Consider the following 92-residue polypeptide: Small ribosomal subunit protein uS19 (92 aa).

Belongs to the universal ribosomal protein uS19 family.

Protein S19 forms a complex with S13 that binds strongly to the 16S ribosomal RNA. This Macrococcus caseolyticus (strain JCSC5402) (Macrococcoides caseolyticum) protein is Small ribosomal subunit protein uS19.